The primary structure comprises 386 residues: Methylthioribose-1-phosphate isomerase (386 aa).

The active-site Proton donor is the Asp258.

The protein belongs to the eIF-2B alpha/beta/delta subunits family. MtnA subfamily.

Its subcellular location is the cytoplasm. The protein resides in the nucleus. The catalysed reaction is 5-(methylsulfanyl)-alpha-D-ribose 1-phosphate = 5-(methylsulfanyl)-D-ribulose 1-phosphate. It participates in amino-acid biosynthesis; L-methionine biosynthesis via salvage pathway; L-methionine from S-methyl-5-thio-alpha-D-ribose 1-phosphate: step 1/6. In terms of biological role, catalyzes the interconversion of methylthioribose-1-phosphate (MTR-1-P) into methylthioribulose-1-phosphate (MTRu-1-P). The sequence is that of Methylthioribose-1-phosphate isomerase from Postia placenta (strain ATCC 44394 / Madison 698-R) (Brown rot fungus).